The sequence spans 151 residues: Small ribosomal subunit protein uS13 (151 aa).

This sequence belongs to the universal ribosomal protein uS13 family. Part of the 30S ribosomal subunit. Forms a loose heterodimer with protein S19. Forms two bridges to the 50S subunit in the 70S ribosome.

In terms of biological role, located at the top of the head of the 30S subunit, it contacts several helices of the 16S rRNA. In the 70S ribosome it contacts the 23S rRNA (bridge B1a) and protein L5 of the 50S subunit (bridge B1b), connecting the 2 subunits; these bridges are implicated in subunit movement. In Methanospirillum hungatei JF-1 (strain ATCC 27890 / DSM 864 / NBRC 100397 / JF-1), this protein is Small ribosomal subunit protein uS13.